Consider the following 425-residue polypeptide: Glutamate-1-semialdehyde 2,1-aminomutase (425 aa).

Residue Lys264 is modified to N6-(pyridoxal phosphate)lysine.

Belongs to the class-III pyridoxal-phosphate-dependent aminotransferase family. HemL subfamily. In terms of assembly, homodimer. It depends on pyridoxal 5'-phosphate as a cofactor.

It localises to the cytoplasm. The enzyme catalyses (S)-4-amino-5-oxopentanoate = 5-aminolevulinate. The protein operates within porphyrin-containing compound metabolism; protoporphyrin-IX biosynthesis; 5-aminolevulinate from L-glutamyl-tRNA(Glu): step 2/2. The sequence is that of Glutamate-1-semialdehyde 2,1-aminomutase from Hydrogenobaculum sp. (strain Y04AAS1).